A 587-amino-acid polypeptide reads, in one-letter code: Arginine--tRNA ligase (587 aa).

Positions alanine 123–histidine 133 match the 'HIGH' region motif.

It belongs to the class-I aminoacyl-tRNA synthetase family. In terms of assembly, monomer.

It is found in the cytoplasm. The enzyme catalyses tRNA(Arg) + L-arginine + ATP = L-arginyl-tRNA(Arg) + AMP + diphosphate. The polypeptide is Arginine--tRNA ligase (Alkaliphilus oremlandii (strain OhILAs) (Clostridium oremlandii (strain OhILAs))).